A 629-amino-acid polypeptide reads, in one-letter code: DNA-directed RNA polymerase subunit beta' (629 aa).

C70, C72, C85, and C88 together coordinate Zn(2+). Mg(2+) contacts are provided by D472, D474, and D476.

It belongs to the RNA polymerase beta' chain family. RpoC1 subfamily. In plastids the minimal PEP RNA polymerase catalytic core is composed of four subunits: alpha, beta, beta', and beta''. When a (nuclear-encoded) sigma factor is associated with the core the holoenzyme is formed, which can initiate transcription. Mg(2+) is required as a cofactor. The cofactor is Zn(2+).

The protein resides in the plastid. Its subcellular location is the chloroplast. It catalyses the reaction RNA(n) + a ribonucleoside 5'-triphosphate = RNA(n+1) + diphosphate. Functionally, DNA-dependent RNA polymerase catalyzes the transcription of DNA into RNA using the four ribonucleoside triphosphates as substrates. In Pyropia yezoensis (Susabi-nori), this protein is DNA-directed RNA polymerase subunit beta'.